Reading from the N-terminus, the 147-residue chain is Large ribosomal subunit protein uL15 (147 aa).

The tract at residues 1 to 54 is disordered; sequence MRLSDIKPTPGSMKKRTRVGRGIGSGKGKTSGKGHKGQKARGRGKVHPWFEGGQ. Residues 30-46 are compositionally biased toward basic residues; it reads TSGKGHKGQKARGRGKV.

It belongs to the universal ribosomal protein uL15 family. Part of the 50S ribosomal subunit.

Its function is as follows. Binds to the 23S rRNA. This chain is Large ribosomal subunit protein uL15, found in Thermosipho melanesiensis (strain DSM 12029 / CIP 104789 / BI429).